A 119-amino-acid polypeptide reads, in one-letter code: Beta-2-microglobulin (119 aa).

The first 20 residues, 1–20 (MSPSVALAVLALLSLSGLEA), serve as a signal peptide directing secretion. The 90-residue stretch at 25–114 (PKIQVYSRHP…VTLSGPRTVK (90 aa)) folds into the Ig-like C1-type domain. Cysteine 45 and cysteine 100 are joined by a disulfide.

It belongs to the beta-2-microglobulin family. In terms of assembly, heterodimer of an alpha chain and a beta chain. Beta-2-microglobulin is the beta-chain of major histocompatibility complex class I molecules.

It localises to the secreted. In terms of biological role, component of the class I major histocompatibility complex (MHC). Involved in the presentation of peptide antigens to the immune system. This chain is Beta-2-microglobulin (B2M), found in Macaca fascicularis (Crab-eating macaque).